The primary structure comprises 323 residues: Pantothenate kinase (323 aa).

Polar residues predominate over residues 1–12 (MAEQNAASTTGV). Positions 1–24 (MAEQNAASTTGVKPSPRTPDFSPY) are disordered. 108 to 115 (GSVAVGKS) contacts ATP.

The protein belongs to the prokaryotic pantothenate kinase family.

It localises to the cytoplasm. The enzyme catalyses (R)-pantothenate + ATP = (R)-4'-phosphopantothenate + ADP + H(+). The protein operates within cofactor biosynthesis; coenzyme A biosynthesis; CoA from (R)-pantothenate: step 1/5. This Corynebacterium glutamicum (strain R) protein is Pantothenate kinase.